The primary structure comprises 921 residues: Isoleucine--tRNA ligase 1 (921 aa).

The 'HIGH' region motif lies at 57–67 (PYANGDIHMGH). E552 contributes to the L-isoleucyl-5'-AMP binding site. The 'KMSKS' region signature appears at 593–597 (KMSKS). K596 is a binding site for ATP. Zn(2+) is bound by residues C888, C891, C908, and C911.

It belongs to the class-I aminoacyl-tRNA synthetase family. IleS type 1 subfamily. As to quaternary structure, monomer. Requires Zn(2+) as cofactor.

It is found in the cytoplasm. The enzyme catalyses tRNA(Ile) + L-isoleucine + ATP = L-isoleucyl-tRNA(Ile) + AMP + diphosphate. Functionally, catalyzes the attachment of isoleucine to tRNA(Ile). As IleRS can inadvertently accommodate and process structurally similar amino acids such as valine, to avoid such errors it has two additional distinct tRNA(Ile)-dependent editing activities. One activity is designated as 'pretransfer' editing and involves the hydrolysis of activated Val-AMP. The other activity is designated 'posttransfer' editing and involves deacylation of mischarged Val-tRNA(Ile). This is Isoleucine--tRNA ligase 1 from Bacillus cereus (strain ATCC 10987 / NRS 248).